The primary structure comprises 386 residues: Oxysterol-binding protein-related protein 4A (386 aa).

This sequence belongs to the OSBP family. As to expression, expressed in roots, stems and flowers.

May be involved in the transport of sterols. The sequence is that of Oxysterol-binding protein-related protein 4A (ORP4A) from Arabidopsis thaliana (Mouse-ear cress).